We begin with the raw amino-acid sequence, 283 residues long: Non-selective voltage-gated ion channel VDAC3 (283 aa).

Cys2 is modified (N-acetylcysteine). Residue Thr4 is modified to Phosphothreonine. N6-acetyllysine is present on residues Lys12, Lys15, and Lys20. 2 beta stranded membrane-spanning segments follow: residues Met26–Ser35 and Val39–Ala47. A Glycyl lysine isopeptide (Lys-Gly) (interchain with G-Cter in ubiquitin) cross-link involves residue Lys53. Beta stranded transmembrane passes span Ala54–Ile64, Leu69–Asn76, and Thr80–Asn89. Position 90 is an N6-acetyllysine (Lys90). Residues Leu95 to Val104 traverse the membrane as a beta stranded segment. Glycyl lysine isopeptide (Lys-Gly) (interchain with G-Cter in ubiquitin) cross-links involve residues Lys109 and Lys110. 10 beta stranded membrane passes run Ser111–Arg120, Phe123–Asp130, Thr137–Ala145, Leu150–Asp158, Lys163–Ala175, Phe178–Asn185, Glu189–Val198, Ile202–Thr211, Arg218–Leu227, and Thr231–Asn238. Ser241 bears the Phosphoserine mark. NAD(+)-binding positions include Leu242–Gly244 and Ser260–Asp264. The next 2 membrane-spanning stretches (beta stranded) occupy residues Leu242–Leu251 and Gly254–Ile263. Lys266 carries the N6-acetyllysine; alternate modification. Lys266 participates in a covalent cross-link: Glycyl lysine isopeptide (Lys-Gly) (interchain with G-Cter in ubiquitin); alternate. A beta stranded transmembrane segment spans residues His273 to Glu282.

This sequence belongs to the eukaryotic mitochondrial porin family. In terms of assembly, interacts with ARMC12 in a TBC1D21-dependent manner. Interacts with MISFA. Ubiquitinated by PRKN during mitophagy, leading to its degradation and enhancement of mitophagy. Deubiquitinated by USP30.

It localises to the mitochondrion outer membrane. The protein localises to the membrane. The catalysed reaction is chloride(in) = chloride(out). It catalyses the reaction K(+)(in) = K(+)(out). Its function is as follows. Non-selective voltage-gated ion channel that mediates the transport of anions and cations through the mitochondrion outer membrane and plasma membrane. Forms a high-conducting channel with a stable open state and a voltage-induced closure with a mild preference for anions over cations. Involved in male fertility and sperm mitochondrial sheath formation. This is Non-selective voltage-gated ion channel VDAC3 from Sus scrofa (Pig).